Here is a 433-residue protein sequence, read N- to C-terminus: MKNWRTLIFGLMFSVSTAFAAPQQMDKIAAVVNNGVVLESDINNRLQSVKRDAQHAGQQIPDEQTLRHQILERLIIDNILLQMAKQMGITIPDQALDSTIANIAAQNHITVDQMKHRIAADGMNFDTYRDQIRKEMLIAEVRNNEVRRRVTILPQEIDALVKQISNQNTNDTELNISHILIPLPENPDQAQMEKAMTVVQKIMSELKHGVDFGKLAIAYSADPQALKGGNMGWSRLQELPTLFAEQLQLAQKGAVVGPIRSGVGFHILKVNDIRGGNPTIAVTEVHARHILLRTSPVMTDDQARTKLQQIASDIRSGKTDFADAAKEFSDDPGSALRGGDLGWTAPDIYDPAFRDALMRLNKGEISQPVHSSFGWHLIQLLDTRKVDKTDVAQKDRAYRMLFNRKFTEEAQSWMQEQRASAYVKILDGNDAQQ.

The first 20 residues, 1–20, serve as a signal peptide directing secretion; that stretch reads MKNWRTLIFGLMFSVSTAFA. PpiC domains lie at 171–272 and 282–382; these read DTEL…KVND and VTEV…QLLD.

The protein localises to the periplasm. The enzyme catalyses [protein]-peptidylproline (omega=180) = [protein]-peptidylproline (omega=0). Functionally, chaperone involved in the correct folding and assembly of outer membrane proteins. Recognizes specific patterns of aromatic residues and the orientation of their side chains, which are found more frequently in integral outer membrane proteins. May act in both early periplasmic and late outer membrane-associated steps of protein maturation. The polypeptide is Chaperone SurA (Photorhabdus laumondii subsp. laumondii (strain DSM 15139 / CIP 105565 / TT01) (Photorhabdus luminescens subsp. laumondii)).